A 250-amino-acid chain; its full sequence is 5-oxoprolinase subunit A (250 aa).

This sequence belongs to the LamB/PxpA family. Forms a complex composed of PxpA, PxpB and PxpC.

The catalysed reaction is 5-oxo-L-proline + ATP + 2 H2O = L-glutamate + ADP + phosphate + H(+). Functionally, catalyzes the cleavage of 5-oxoproline to form L-glutamate coupled to the hydrolysis of ATP to ADP and inorganic phosphate. The polypeptide is 5-oxoprolinase subunit A (Streptomyces griseus subsp. griseus (strain JCM 4626 / CBS 651.72 / NBRC 13350 / KCC S-0626 / ISP 5235)).